Here is a 770-residue protein sequence, read N- to C-terminus: Arf-GAP with coiled-coil, ANK repeat and PH domain-containing protein 2 (770 aa).

Positions 6-226 constitute a BAR domain; sequence DFEECLKDSP…MKDLGAQLDR (221 aa). The 96-residue stretch at 266 to 361 folds into the PH domain; the sequence is GIVMEGYLFK…WIKAVQTSIA (96 aa). Residues 371-392 are disordered; the sequence is SEKLDKKSSPSTGSLDSGSESK. The segment covering 379 to 388 has biased composition (low complexity); the sequence is SPSTGSLDSG. A phosphoserine mark is found at serine 384 and serine 387. An Arf-GAP domain is found at 399–520; the sequence is ESALQRVQCI…KFVDKYSTLL (122 aa). A C4-type zinc finger spans residues 414–437; it reads CCDCGLADPRWASINLGITLCIEC. Phosphoserine is present on serine 521. The span at 548–561 shows a compositional bias: polar residues; it reads TPVKSNDSGIQQCS. Residues 548–571 are disordered; the sequence is TPVKSNDSGIQQCSDDGRESLPST. Serine 573 and serine 576 each carry phosphoserine. ANK repeat units follow at residues 632–661, 665–694, and 698–727; these read NQAT…NVNQ, QGRG…NQHA, and EGKD…NEEM. Tyrosine 734 is subject to Phosphotyrosine. A Phosphoserine modification is found at serine 767.

As to quaternary structure, interacts with RAB35 (GTP-bound form); the interaction is direct and probably recruits ACAP2 to membranes. Interacts with MICALL1; the interaction is indirect through RAB35.

It is found in the endosome membrane. Its subcellular location is the cell membrane. Its activity is regulated as follows. GAP activity stimulated by phosphatidylinositol 4,5-bisphosphate (PIP2) and phosphatidic acid. In terms of biological role, GTPase-activating protein (GAP) for ADP ribosylation factor 6 (ARF6). Doesn't show GAP activity for RAB35. This chain is Arf-GAP with coiled-coil, ANK repeat and PH domain-containing protein 2 (Acap2), found in Rattus norvegicus (Rat).